The primary structure comprises 715 residues: MSMFNKVVKEFQWGQHKVRLETGEVARQASGAVIVDVEDTVVLATVVGAKSAKPGQDFFPLTVDYLEKTYSAGKIPGGFFRREGRPSEHETLTSRLIDRPLRPLFPEGFYNEVQVVIHVLSVNPDIPADIPALIGASAALAVSGLPFNGPVGAARVAYIDNAYVLNPTRDQIKASSLDLVVAGTERAVLMVESEADQLPEDVMLGAVVFGHEQMQIAIDAIHELVREGGKPEWDWQPAPKNEALIARVTELAHGDLLAAYQLRDKQARSTKLKEVYAATSAKLEEDALAAGTVAADKATVGNILFDIEAKIVRSQILNGEPRIDGRDTRTVRPIEIRTGVLPRTHGSALFTRGETQALVVATLGTKGDEQIIDALEGEYRERFMLHYNMPPFATGETGRVGSPKRREIGHGRLAKRALVKCLPSADEFGYSIRVVSEITESNGSSSMASVCGGCLALMDAGVPMKAHVAGIAMGLILEGNKFAVLTDILGDEDHLGDMDFKVAGTEHGVTALQMDIKIQGITKEIMQVALAQAKEGRMHILGKMTSAVSGANTQLSEFAPRMITIKINPEKIRDVIGKGGSVIRALTEETGTTIDISDDGVVTIASTSSEGMAEAKKRIENITAEIEVGQVYEGTVLKLLDFGAIVNLLPGKDGLLHISEIVNERVKDINDYLKEGQQVKVKVIQTDEKGRVRLSAKALLNEAAAASQSDTPPQQ.

Mg(2+) is bound by residues D493 and D499. The KH domain maps to 560–619 (PRMITIKINPEKIRDVIGKGGSVIRALTEETGTTIDISDDGVVTIASTSSEGMAEAKKRI). Residues 629–697 (GQVYEGTVLK…EKGRVRLSAK (69 aa)) form the S1 motif domain.

Belongs to the polyribonucleotide nucleotidyltransferase family. It depends on Mg(2+) as a cofactor.

Its subcellular location is the cytoplasm. The enzyme catalyses RNA(n+1) + phosphate = RNA(n) + a ribonucleoside 5'-diphosphate. Involved in mRNA degradation. Catalyzes the phosphorolysis of single-stranded polyribonucleotides processively in the 3'- to 5'-direction. This is Polyribonucleotide nucleotidyltransferase from Burkholderia vietnamiensis (strain G4 / LMG 22486) (Burkholderia cepacia (strain R1808)).